A 450-amino-acid polypeptide reads, in one-letter code: MKSTETTYKKDNMGLTPSQIVNELNRFIVGQDKAKKAVAIALRNRYRRKRVEGNLRNEIVPKNILMIGSTGVGKTEIARRLAKLTNSPFYKIEATKFTEVGYVGRDVESIIRDLVEIAVNTEKALAKIAVDINAREKAIERILDSLVGKTSSSETREKFKAKVLNGELDDTEIEISVADTTPVGGGGFEIPCIPGASMGVLNLGDMIGRALGNSKTKTKKMLIKDAMTVIIPEESEKLIDQEKIIQKAINLAENDGIVFIDEIDKIASTSNAGAKNAEISREGVQRDLLPLIEGTTVNTKYGPVKTDHILFIASGAFHIAKPSDLLPELQGRLPIRVELNLLTKDDMIKILLEPETSLIKQYSALIGTEEVHLEFTDAAIEKIADYAITVNLEVEDIGARRLHTILENLLEDISFEASEMKVKKIIIDDKFVENQLSKIITNLDLAKFVL.

Residues V29, 71–76 (GVGKTE), D261, E328, and R400 contribute to the ATP site.

Belongs to the ClpX chaperone family. HslU subfamily. As to quaternary structure, a double ring-shaped homohexamer of HslV is capped on each side by a ring-shaped HslU homohexamer. The assembly of the HslU/HslV complex is dependent on binding of ATP.

It is found in the cytoplasm. In terms of biological role, ATPase subunit of a proteasome-like degradation complex; this subunit has chaperone activity. The binding of ATP and its subsequent hydrolysis by HslU are essential for unfolding of protein substrates subsequently hydrolyzed by HslV. HslU recognizes the N-terminal part of its protein substrates and unfolds these before they are guided to HslV for hydrolysis. This chain is ATP-dependent protease ATPase subunit HslU, found in Rickettsia prowazekii (strain Madrid E).